A 155-amino-acid polypeptide reads, in one-letter code: 2-C-methyl-D-erythritol 2,4-cyclodiphosphate synthase (155 aa).

The a divalent metal cation site is built by D10, H12, and H46. 10-12 (DSH) provides a ligand contact to 4-CDP-2-C-methyl-D-erythritol 2-phosphate. Residues 60–62 (DIG), 65–69 (FDEND), and K140 each bind 4-CDP-2-C-methyl-D-erythritol 2-phosphate.

This sequence belongs to the IspF family. As to quaternary structure, homotrimer. A divalent metal cation is required as a cofactor.

The enzyme catalyses 4-CDP-2-C-methyl-D-erythritol 2-phosphate = 2-C-methyl-D-erythritol 2,4-cyclic diphosphate + CMP. Its pathway is isoprenoid biosynthesis; isopentenyl diphosphate biosynthesis via DXP pathway; isopentenyl diphosphate from 1-deoxy-D-xylulose 5-phosphate: step 4/6. In terms of biological role, involved in the biosynthesis of isopentenyl diphosphate (IPP) and dimethylallyl diphosphate (DMAPP), two major building blocks of isoprenoid compounds. Catalyzes the conversion of 4-diphosphocytidyl-2-C-methyl-D-erythritol 2-phosphate (CDP-ME2P) to 2-C-methyl-D-erythritol 2,4-cyclodiphosphate (ME-CPP) with a corresponding release of cytidine 5-monophosphate (CMP). The polypeptide is 2-C-methyl-D-erythritol 2,4-cyclodiphosphate synthase (Mycoplasmoides gallisepticum (strain R(low / passage 15 / clone 2)) (Mycoplasma gallisepticum)).